A 246-amino-acid polypeptide reads, in one-letter code: MAMIGVMEDSKLHEDMENDMLGDLTSRAREALALFISISLRDNTELNLVVPNGPSWLSHVDKKDLYLNDETLKKITDILVAKDVTGNYNIVNVAIAAAPQHSQKRFVIYIKTSIYVEIVVIGNMKSNLTLIADGQDSTIITFNLSSSNSKRTFNTATFASNGDGFIRVDMCFRNTTWPVKGPVVTLRVNGDMSIIYRCRVEEYQDALYPHKNRQCYREYFLMDTVDFICGNAAAVFQFCQIVHMDG.

Asn-127 and Asn-143 each carry an N-linked (GlcNAc...) asparagine glycan. Residue Thr-152 participates in substrate binding. An N-linked (GlcNAc...) asparagine glycan is attached at Asn-174. The active-site Proton donor is the Asp-205. Asp-226 functions as the Nucleophile in the catalytic mechanism.

The protein belongs to the pectinesterase family.

The catalysed reaction is [(1-&gt;4)-alpha-D-galacturonosyl methyl ester](n) + n H2O = [(1-&gt;4)-alpha-D-galacturonosyl](n) + n methanol + n H(+). Its pathway is glycan metabolism; pectin degradation; 2-dehydro-3-deoxy-D-gluconate from pectin: step 1/5. Functionally, acts in the modification of cell walls via demethylesterification of cell wall pectin. This Arabidopsis thaliana (Mouse-ear cress) protein is Putative pectinesterase 57 (PME57).